We begin with the raw amino-acid sequence, 469 residues long: Ribosomal protein uS12 methylthiotransferase RimO (469 aa).

The 111-residue stretch at 34-144 (NKIGFVSLGC…VLEHVHQFAP (111 aa)) folds into the MTTase N-terminal domain. The [4Fe-4S] cluster site is built by Cys43, Cys79, Cys108, Cys176, Cys180, and Cys183. A Radical SAM core domain is found at 162–399 (LTPKHYAYLK…MLVQQEISAA (238 aa)). In terms of domain architecture, TRAM spans 402–468 (QKRIGSTMKV…EYDLWGSLVR (67 aa)).

This sequence belongs to the methylthiotransferase family. RimO subfamily. [4Fe-4S] cluster is required as a cofactor.

Its subcellular location is the cytoplasm. It carries out the reaction L-aspartate(89)-[ribosomal protein uS12]-hydrogen + (sulfur carrier)-SH + AH2 + 2 S-adenosyl-L-methionine = 3-methylsulfanyl-L-aspartate(89)-[ribosomal protein uS12]-hydrogen + (sulfur carrier)-H + 5'-deoxyadenosine + L-methionine + A + S-adenosyl-L-homocysteine + 2 H(+). Its function is as follows. Catalyzes the methylthiolation of an aspartic acid residue of ribosomal protein uS12. This Vibrio vulnificus (strain CMCP6) protein is Ribosomal protein uS12 methylthiotransferase RimO.